Consider the following 315-residue polypeptide: Manganese-dependent 2,3-dihydroxybiphenyl 1,2-dioxygenase (315 aa).

VOC domains lie at 7–121 and 150–273; these read KFGH…IYYD and RIDH…LFSG. The Mn(2+) site is built by His-153, His-216, and Glu-269.

This sequence belongs to the extradiol ring-cleavage dioxygenase family. In terms of assembly, homotetramer. The cofactor is Mn(2+).

It carries out the reaction biphenyl-2,3-diol + O2 = 2-hydroxy-6-oxo-6-phenylhexa-2,4-dienoate + H(+). The protein operates within xenobiotic degradation; biphenyl degradation; 2-hydroxy-2,4-pentadienoate and benzoate from biphenyl: step 3/4. In terms of biological role, catalyzes the meta-cleavage of the hydroxylated biphenyl ring. The enzyme can oxidize a wide range of substrates, and the substrate preference order is 2,3-dihydroxybiphenyl &gt; 3-methylcatechol &gt; catechol &gt; 4-methylcatechol &gt; 4-chlorocatechol. The sequence is that of Manganese-dependent 2,3-dihydroxybiphenyl 1,2-dioxygenase (bphC) from Geobacillus genomosp. 3.